Here is a 513-residue protein sequence, read N- to C-terminus: Plexin domain-containing protein 2 (513 aa).

A signal peptide spans 1–24 (MGARSESLVGVVLLFQLLADRLWC). Residues 25–438 (AATASDSLYD…AEMKTGTLHT (414 aa)) are Extracellular-facing. 6 N-linked (GlcNAc...) asparagine glycosylation sites follow: asparagine 88, asparagine 145, asparagine 198, asparagine 206, asparagine 222, and asparagine 330. The region spanning 312-357 (TCLQFNSCSSCVSSMIGFNCSWCNIPQRCSSGFDRHRQDWVENGCT) is the PSI domain. A helical membrane pass occupies residues 439 to 459 (GLIIGILILVLLIITAILVAV). The Cytoplasmic portion of the chain corresponds to 460–513 (YMYHHPTSSASLFLIERRPSRWPAMKFRRGSGHPAYAEVEPIGEKEGFIVSEQC).

The protein belongs to the plexin family.

Its subcellular location is the membrane. In Xenopus laevis (African clawed frog), this protein is Plexin domain-containing protein 2 (plxdc2).